The sequence spans 150 residues: Flagellar assembly factor FliW (150 aa).

The protein belongs to the FliW family. In terms of assembly, interacts with translational regulator CsrA and flagellin(s).

The protein resides in the cytoplasm. In terms of biological role, acts as an anti-CsrA protein, binds CsrA and prevents it from repressing translation of its target genes, one of which is flagellin. Binds to flagellin and participates in the assembly of the flagellum. The protein is Flagellar assembly factor FliW of Caldanaerobacter subterraneus subsp. tengcongensis (strain DSM 15242 / JCM 11007 / NBRC 100824 / MB4) (Thermoanaerobacter tengcongensis).